The chain runs to 202 residues: MKALTTRQQEVYDLVRDHLAQTGMPPTRAEIAQRLGFRSPNAAEEHLKALARKGVIEIVSGASRGIRLLMEEEDGLPLIGRVAAGEPLLAQQHIEGHYKVDPSMFKPSADFLLRVNGMSMRDIGILDGDLLAVHKTQDVRNGQVVVARIDDEVTVKRLKKQGNIVQLLPENSEFQPIVVDLREQSFTIEGLAVGVIRNGDWI.

A DNA-binding region (H-T-H motif) is located at residues 28 to 48; that stretch reads RAEIAQRLGFRSPNAAEEHLK. Residues serine 119 and lysine 156 each act as for autocatalytic cleavage activity in the active site.

The protein belongs to the peptidase S24 family. As to quaternary structure, homodimer.

The catalysed reaction is Hydrolysis of Ala-|-Gly bond in repressor LexA.. Its function is as follows. Represses a number of genes involved in the response to DNA damage (SOS response), including recA and lexA. Binds to the 16 bp palindromic sequence 5'-CTGTATATATATACAG-3'. In the presence of single-stranded DNA, RecA interacts with LexA causing an autocatalytic cleavage which disrupts the DNA-binding part of LexA, leading to derepression of the SOS regulon and eventually DNA repair. The protein is LexA repressor of Yersinia enterocolitica serotype O:8 / biotype 1B (strain NCTC 13174 / 8081).